Reading from the N-terminus, the 388-residue chain is S-adenosylmethionine synthase 1 (388 aa).

Glu11 contacts Mg(2+). His17 lines the ATP pocket. Glu45 serves as a coordination point for K(+). L-methionine contacts are provided by Glu58 and Gln101. ATP contacts are provided by residues 168 to 170 (DAK), 233 to 236 (SGRF), Asp244, 250 to 251 (RK), Ala267, Lys271, and Lys275. Asp244 lines the L-methionine pocket. Residue Lys275 participates in L-methionine binding.

The protein belongs to the AdoMet synthase family. Homotetramer. Mn(2+) serves as cofactor. It depends on Mg(2+) as a cofactor. The cofactor is Co(2+). Requires K(+) as cofactor. In terms of tissue distribution, mostly in Roots.

The protein localises to the cytoplasm. It catalyses the reaction L-methionine + ATP + H2O = S-adenosyl-L-methionine + phosphate + diphosphate. It participates in amino-acid biosynthesis; S-adenosyl-L-methionine biosynthesis; S-adenosyl-L-methionine from L-methionine: step 1/1. Catalyzes the formation of S-adenosylmethionine from methionine and ATP. The reaction comprises two steps that are both catalyzed by the same enzyme: formation of S-adenosylmethionine (AdoMet) and triphosphate, and subsequent hydrolysis of the triphosphate. This Pinus contorta (Shore pine) protein is S-adenosylmethionine synthase 1 (SAMS1).